We begin with the raw amino-acid sequence, 762 residues long: Polymeric immunoglobulin receptor (762 aa).

Positions 1–18 are cleaved as a signal peptide; it reads MTLFFLTCLLAVFPVVSM. Positions 19–120 constitute an Ig-like V-type 1; required for binding to polymeric IgA and IgM domain; it reads KSPIFGPPEI…GVGINNRGLS (102 aa). Topologically, residues 19-636 are extracellular; it reads KSPIFGPPEI…SSAGQGGSSK (618 aa). Disulfide bonds link C40-C110 and C56-C64. N83 and N135 each carry an N-linked (GlcNAc...) asparagine glycan. 4 consecutive Ig-like V-type domains span residues 145-238, 251-351, 363-460, and 464-563; these read GGKV…DLHV, GSSV…ETTF, GGSV…LKIV, and PNLK…VYVA. Intrachain disulfides connect C152-C221, C258-C324, C272-C280, C370-C443, C384-C394, C484-C546, C488-C522, and C498-C505. N291 carries an N-linked (GlcNAc...) asparagine glycan. N423 carries an N-linked (GlcNAc...) asparagine glycan. N530 is a glycosylation site (N-linked (GlcNAc...) asparagine). Residues 604–634 are disordered; the sequence is FVDTQAKDPEDAAGGSIASADPGSSAGQGGS. A helical membrane pass occupies residues 637-659; it reads VVVSTLVPLALVLALGVLVVGVL. The Cytoplasmic segment spans residues 660–762; sequence RARHRKNVDR…ANIQDGPSKA (103 aa).

Interacts (mainly via CDR1-like domain) with dimeric IgA. Interacts (mainly via CDR2-like domain) with pentameric IgM. In terms of assembly, either free or part of the secretory IgA (sIgA) complex that consists of two, four or five IgA monomers, and two additional non-Ig polypeptides, namely the JCHAIN and the secretory component (the proteolytic product of PIGR). Free secretory component interacts with bacterial antigens toxA of C.difficile and eae of E.coli. N-glycosylated. Carries predominantly biantennary complex type glycans which are largely non-fucosylated. Sialylation with NeuAc is common, except for Asn-291 which carries exclusively high mannose glycans. N-glycans attached to Asn-83: Gal2GlcNAc2Man3GlcNAc2; Gal2GlcNAc2Man3GlcNAc2(Fuc); Gal1GlcNAc1Man4GlcNAc2(Fuc); Gal1GlcNAc1Man3GlcNAc2; Gal1GlcNAc1Man4GlcNAc2 and NeuAc1Gal2GlcNAc2Man3GlcNAc2. N-glycans attached to Asn-135: Gal2GlcNAc2Man3GlcNAc2; Gal1GlcNAc1Man3GlcNAc2 and NeuAc1Gal2GlcNAc2Man3GlcNAc2. N-glycans attached to Asn-291: Man5-8GlcNAc2. N-glycans attached to Asn-423: NeuAc1Gal2GlcNAc2Man3GlcNAc2. N-glycans attached to Asn-530: Gal2GlcNAc2Man3GlcNAc2; Gal1GlcNAc1Man3GlcNAc2 and NeuAc1Gal2GlcNAc2Man3GlcNAc2. N-glycosylation is required for anchoring IgA molecules to mucus but is not necessary for Ig binding.

The protein localises to the cell membrane. Its subcellular location is the secreted. In terms of biological role, mediates selective transcytosis of polymeric IgA and IgM across mucosal epithelial cells. Binds polymeric IgA and IgM at the basolateral surface of epithelial cells. The complex is then transported across the cell to be secreted at the apical surface. During this process, a cleavage occurs that separates the extracellular (known as the secretory component) from the transmembrane segment. Through its N-linked glycans ensures anchoring of secretory IgA (sIgA) molecules to mucus lining the epithelial surface to neutralize extracellular pathogens. On its own (free form) may act as a non-specific microbial scavenger to prevent pathogen interaction with epithelial cells. The protein is Polymeric immunoglobulin receptor (PIGR) of Equus asinus (Donkey).